A 151-amino-acid chain; its full sequence is FAD synthase (151 aa).

ATP contacts are provided by residues 9–10, 14–17, aspartate 96, and tyrosine 123; these read TF and HPGH.

This sequence belongs to the archaeal FAD synthase family. As to quaternary structure, homodimer. It depends on a divalent metal cation as a cofactor.

It catalyses the reaction FMN + ATP + H(+) = FAD + diphosphate. It participates in cofactor biosynthesis; FAD biosynthesis; FAD from FMN: step 1/1. Functionally, catalyzes the transfer of the AMP portion of ATP to flavin mononucleotide (FMN) to produce flavin adenine dinucleotide (FAD) coenzyme. The protein is FAD synthase of Methanothermobacter thermautotrophicus (strain ATCC 29096 / DSM 1053 / JCM 10044 / NBRC 100330 / Delta H) (Methanobacterium thermoautotrophicum).